The sequence spans 278 residues: Sulfur carrier protein FdhD (278 aa).

Catalysis depends on Cys117, which acts as the Cysteine persulfide intermediate.

This sequence belongs to the FdhD family.

It is found in the cytoplasm. In terms of biological role, required for formate dehydrogenase (FDH) activity. Acts as a sulfur carrier protein that transfers sulfur from IscS to the molybdenum cofactor prior to its insertion into FDH. This chain is Sulfur carrier protein FdhD, found in Variovorax paradoxus (strain S110).